We begin with the raw amino-acid sequence, 735 residues long: Muskelin (735 aa).

N-acetylalanine is present on Ala2. Residues 172–204 (REQEAIRLCLKHFRQHNYTEAFESLQKKTKIAL) enclose the LisH domain. Residues 206-258 (HPMLTDIHDKLVLKGDFDACEELIEKAVNDGLFNQYISQQEYKPRWSQIIPKS) form the CTLH domain. 6 Kelch repeats span residues 284-330 (TVYL…SCHK), 339-391 (QIYT…FDHQ), 408-458 (ILTC…SRIG), 469-515 (CLYV…TGFT), 526-578 (EIHV…SLQE), and 597-651 (VHYL…AQVD).

In terms of assembly, homodimer; may form higher oligomers. Identified in the CTLH complex that contains GID4, RANBP9 and/or RANBP10, MKLN1, MAEA, RMND5A (or alternatively its paralog RMND5B), GID8, ARMC8, WDR26 and YPEL5. Within this complex, MAEA, RMND5A (or alternatively its paralog RMND5B), GID8, WDR26, and RANBP9 and/or RANBP10 form the catalytic core, while GID4, MKLN1, ARMC8 and YPEL5 have ancillary roles. Interacts with RANBP9. Part of a complex consisting of RANBP9, MKLN1 and GID8. Interacts with GABRA1. Interacts with the C-terminal tail of PTGER3.

It is found in the cytoplasm. It localises to the cytosol. Its subcellular location is the nucleus. The protein resides in the nucleoplasm. The protein localises to the cell projection. It is found in the ruffle. It localises to the cell cortex. Its subcellular location is the synapse. The protein resides in the postsynapse. Functionally, component of the CTLH E3 ubiquitin-protein ligase complex that selectively accepts ubiquitin from UBE2H and mediates ubiquitination and subsequent proteasomal degradation of the transcription factor HBP1. Required for internalization of the GABA receptor GABRA1 from the cell membrane via endosomes and subsequent GABRA1 degradation. Acts as a mediator of cell spreading and cytoskeletal responses to the extracellular matrix component THBS1. This is Muskelin (MKLN1) from Homo sapiens (Human).